The chain runs to 566 residues: Malate synthase, glyoxysomal (566 aa).

Arg-182 serves as the catalytic Proton acceptor. The active-site Proton donor is Asp-467. The Microbody targeting signal signature appears at 564–566 (SRL).

It belongs to the malate synthase family.

The protein localises to the glyoxysome. It catalyses the reaction glyoxylate + acetyl-CoA + H2O = (S)-malate + CoA + H(+). Its pathway is carbohydrate metabolism; glyoxylate cycle; (S)-malate from isocitrate: step 2/2. The polypeptide is Malate synthase, glyoxysomal (Cucurbita maxima (Pumpkin)).